The sequence spans 360 residues: tRNA (guanine(9)-N1)-methyltransferase (360 aa).

The interval 1–77 (MENQDTEQSQ…RRKERIKEAE (77 aa)) is disordered. 2 stretches are compositionally biased toward basic and acidic residues: residues 8 to 24 (QSQKRSGSEVEKDDFKR) and 33 to 55 (MTKREYKRQLKQQRWEETKDEYK). Over residues 56–67 (QKKREKKKAARE) the composition is skewed to basic residues. Residues 68 to 77 (RRKERIKEAE) show a composition bias toward basic and acidic residues. Residues 94-293 (RAKVAPQEQI…EVLPPRKVKG (200 aa)) enclose the SAM-dependent MTase TRM10-type domain. S-adenosyl-L-methionine-binding positions include 199-200 (LT), Gly219, 223-227 (DKNRY), Cys231, Leu245, and 257-259 (QVL). Asp223 acts as the Proton acceptor in catalysis. The interval 291-360 (VKGKLTHGSD…SDEPSKGADH (70 aa)) is disordered. Basic and acidic residues predominate over residues 297 to 306 (HGSDPEKSIE). Over residues 307–324 (PSEVSEQPVSSEQSEQPV) the composition is skewed to low complexity. Residues 328–343 (QPVSSEQPVLSEQPVL) show a composition bias toward polar residues.

The protein belongs to the class IV-like SAM-binding methyltransferase superfamily. TRM10 family. As to quaternary structure, monomer.

It localises to the cytoplasm. Its subcellular location is the nucleus. The enzyme catalyses guanosine(9) in tRNA + S-adenosyl-L-methionine = N(1)-methylguanosine(9) in tRNA + S-adenosyl-L-homocysteine + H(+). S-adenosyl-L-methionine-dependent guanine N(1)-methyltransferase that catalyzes the formation of N(1)-methylguanine at position 9 (m1G9) in cytoplasmic tRNA. This Debaryomyces hansenii (strain ATCC 36239 / CBS 767 / BCRC 21394 / JCM 1990 / NBRC 0083 / IGC 2968) (Yeast) protein is tRNA (guanine(9)-N1)-methyltransferase.